An 846-amino-acid chain; its full sequence is Selenocysteine insertion sequence-binding protein 2 (846 aa).

2 stretches are compositionally biased toward basic and acidic residues: residues 151-165 (RRAW…RRAD) and 206-215 (PEFEFSRLDF). 5 disordered regions span residues 151–246 (RRAW…SNMS), 266–288 (TDHT…TREL), 321–440 (TTSS…VPVQ), 448–467 (AALE…RPVV), and 475–613 (VLSK…DSAT). Residue serine 220 is modified to Phosphoserine. 3 stretches are compositionally biased toward polar residues: residues 220–232 (SPKN…TQKQ), 272–288 (AVTN…TREL), and 321–342 (TTSS…SDPS). The Nuclear localization signal motif lies at 370–380 (KKNKKKKEKSK). Polar residues predominate over residues 417 to 428 (KLQSKQQAQNDF). Basic and acidic residues predominate over residues 527–536 (ILKERQERMQ). Positions 542-551 (SAVSPTVASD) are enriched in polar residues. The segment at 666–687 (LVLGLREVLKHLKLRKLKCIII) is RNA-binding. The tract at residues 774–804 (RQEQAGEPGPQTPPSPPMQDPIQSTDEGTLA) is disordered. Residues 783–792 (PQTPPSPPMQ) are compositionally biased toward pro residues.

Ubiquitous.

The protein resides in the cytoplasm. It localises to the nucleus. In terms of biological role, mRNA-binding protein that binds to the SECIS (selenocysteine insertion sequence) element present in the 3'-UTR of mRNAs encoding selenoproteins and facilitates the incorporation of the rare amino acid selenocysteine. Insertion of selenocysteine at UGA codons is mediated by SECISBP2 and EEFSEC: SECISBP2 (1) specifically binds the SECIS sequence once the 80S ribosome encounters an in-frame UGA codon and (2) contacts the RPS27A/eS31 of the 40S ribosome before ribosome stalling. (3) GTP-bound EEFSEC then delivers selenocysteinyl-tRNA(Sec) to the 80S ribosome and adopts a preaccommodated state conformation. (4) After GTP hydrolysis, EEFSEC dissociates from the assembly, selenocysteinyl-tRNA(Sec) accommodates, and peptide bond synthesis and selenoprotein elongation occur. The chain is Selenocysteine insertion sequence-binding protein 2 (Secisbp2) from Rattus norvegicus (Rat).